We begin with the raw amino-acid sequence, 161 residues long: E3 ubiquitin ligase complex SCF subunit sconC (161 aa).

The tract at residues I102 to R161 is interaction with the F-box domain of F-box proteins.

Belongs to the SKP1 family. As to quaternary structure, component of the SCF (SKP1-CUL1-F-box protein) E3 ubiquitin ligase complexes.

It participates in protein modification; protein ubiquitination. Functionally, essential component of the SCF (SKP1-CUL1-F-box protein) E3 ubiquitin ligase complexes, which mediate the ubiquitination and subsequent proteasomal degradation of target proteins. Controls sulfur metabolite repression, probably by mediating the inactivation or degradation of the metR transcription factor. The chain is E3 ubiquitin ligase complex SCF subunit sconC (sconC) from Emericella nidulans (strain FGSC A4 / ATCC 38163 / CBS 112.46 / NRRL 194 / M139) (Aspergillus nidulans).